Consider the following 393-residue polypeptide: Probable pectinesterase 8 (393 aa).

The N-terminal stretch at 1-19 is a signal peptide; it reads MKIISLSISIGIAIIAVLA. N100, N113, N140, N156, and N163 each carry an N-linked (GlcNAc...) asparagine glycan. Position 165 (T165) interacts with substrate. An N-linked (GlcNAc...) asparagine glycan is attached at N182. A substrate-binding site is contributed by Q200. Catalysis depends on D223, which acts as the Proton donor. The active-site Nucleophile is D244. The N-linked (GlcNAc...) asparagine glycan is linked to N295. A substrate-binding site is contributed by R308. 3 N-linked (GlcNAc...) asparagine glycosylation sites follow: N350, N369, and N378.

Belongs to the pectinesterase family. In terms of tissue distribution, expressed in siliques.

It is found in the secreted. It localises to the cell wall. The enzyme catalyses [(1-&gt;4)-alpha-D-galacturonosyl methyl ester](n) + n H2O = [(1-&gt;4)-alpha-D-galacturonosyl](n) + n methanol + n H(+). Its pathway is glycan metabolism; pectin degradation; 2-dehydro-3-deoxy-D-gluconate from pectin: step 1/5. Functionally, acts in the modification of cell walls via demethylesterification of cell wall pectin. In Arabidopsis thaliana (Mouse-ear cress), this protein is Probable pectinesterase 8 (PME8).